A 201-amino-acid polypeptide reads, in one-letter code: Small ribosomal subunit protein uS2 (201 aa).

The protein belongs to the universal ribosomal protein uS2 family. In terms of assembly, part of the 50S ribosomal subunit.

This is Small ribosomal subunit protein uS2 from Thermococcus kodakarensis (strain ATCC BAA-918 / JCM 12380 / KOD1) (Pyrococcus kodakaraensis (strain KOD1)).